The following is a 265-amino-acid chain: Di-trans,poly-cis-undecaprenyl-diphosphate synthase (265 aa).

Residues 236–238 (RFG) carry the RXG motif; crucial for prenyltransferase activity motif.

The protein belongs to the UPP synthase family. Mg(2+) serves as cofactor.

It catalyses the reaction 8 isopentenyl diphosphate + (2E,6E)-farnesyl diphosphate = di-trans,octa-cis-undecaprenyl diphosphate + 8 diphosphate. The protein operates within protein modification; protein glycosylation. It participates in lipid metabolism. In terms of biological role, cis-prenyl transferase involved in the synthesis of dolichol, a long-chain polyprenol that is utilized as a sugar carrier in protein glycosylation in the endoplasmic reticulum (ER). Catalyzes the sequential condensation of isopentenyl pyrophosphate (IPP) with farnesyl pyrophosphate (FPP) to produce a polyprenyl pyrophosphate which contains 11 (major) and 12 (minor) isoprene units. The sequence is that of Di-trans,poly-cis-undecaprenyl-diphosphate synthase from Giardia intestinalis (strain ATCC 50803 / WB clone C6) (Giardia lamblia).